Here is a 291-residue protein sequence, read N- to C-terminus: Phycobilisome 32.1 kDa linker polypeptide, phycocyanin-associated, rod 1 (291 aa).

The region spanning 2-179 (AITTAASRLG…LYRGYANSDR (178 aa)) is the PBS-linker domain. A CpcD-like domain is found at 236-288 (SKLFRVEITAISAPGYPKVRRSNKAVIVPFEQLNQTLQQINRLGGKVASITPA).

The protein belongs to the phycobilisome linker protein family. As to quaternary structure, part of 2 PBS rod complexes, the conventional CpcG-PBS rod and a photosystem I-specific CpcL-PBS rod, both of which include ferredoxin--NADP reductase (petH). CpcG-PBS has on average 3 stacked phycocyanin hexamers (PC, CpcA and CpcB). Linker CpcG connects the PC stack to the thylakoid, the hexamers are linked by 1 copy of CpcC1, 1 copy of CpcC2 and the stack is terminated by a single copy of CpcD. The CpcL-PBS has on average 5 stacked phycocyanin hexamers (PC, CpcA and CpcB). Linker CpcL connects the PC stack to the thylakoid, the hexamers are linked by 1 copy of CpcC1, 3 copies of CpcC2 and the stack is terminated by a single copy of CpcD.

The protein localises to the cellular thylakoid membrane. Functionally, rod linker protein, connecting hexameric phycocyanin (PC, made by cpcA and cpcB) rods in the phycobilisome (PBS). PC is the major phycobiliprotein in PBS rods. Linker polypeptides determine the state of aggregation and the location of the disk-shaped phycobiliprotein units within the phycobilisome and modulate their spectroscopic properties in order to mediate a directed and optimal energy transfer. The polypeptide is Phycobilisome 32.1 kDa linker polypeptide, phycocyanin-associated, rod 1 (cpcC1) (Synechocystis sp. (strain ATCC 27184 / PCC 6803 / Kazusa)).